Consider the following 290-residue polypeptide: Pyridoxal kinase PdxY (290 aa).

Residues Ser12 and Thr47–Gln48 contribute to the substrate site. Residues Asp114, Glu151, Lys184, and Arg211–Leu214 each bind ATP. Residue Asp225 participates in substrate binding.

This sequence belongs to the pyridoxine kinase family. PdxY subfamily. As to quaternary structure, homodimer. Mg(2+) serves as cofactor.

It carries out the reaction pyridoxal + ATP = pyridoxal 5'-phosphate + ADP + H(+). It functions in the pathway cofactor metabolism; pyridoxal 5'-phosphate salvage; pyridoxal 5'-phosphate from pyridoxal: step 1/1. Functionally, pyridoxal kinase involved in the salvage pathway of pyridoxal 5'-phosphate (PLP). Catalyzes the phosphorylation of pyridoxal to PLP. The sequence is that of Pyridoxal kinase PdxY from Pseudomonas fluorescens (strain ATCC BAA-477 / NRRL B-23932 / Pf-5).